Reading from the N-terminus, the 613-residue chain is WD40 repeat-containing protein HOS15 (613 aa).

Residues 5 to 37 form the LisH domain; sequence TSVELNFLVFRYLQESGFTHAAFTLGYEAGINK. 2 disordered regions span residues 101–174 and 193–214; these read KKRK…REKM and EIER…KQLG. 8 WD repeats span residues 263 to 302, 322 to 362, 363 to 402, 405 to 443, 446 to 485, 488 to 536, 539 to 580, and 582 to 613; these read GHTS…FKAV, EKSK…STLS, KHKG…WKQQ, FHSG…PAKT, GHQG…FVHD, EHTK…MLCS, GHRE…KTYT, and NGGI…DFRM.

Its subcellular location is the nucleus. Functionally, acts as a repressor of cold stress-regulated gene expression. Interacts specifically with and promotes deacetylation of histone H4. Plays a role in gene regulation for plant acclimation and tolerance to cold stress. This is WD40 repeat-containing protein HOS15 from Arabidopsis thaliana (Mouse-ear cress).